The sequence spans 185 residues: Lysozyme g (185 aa).

Gln1 carries the post-translational modification Pyrrolidone carboxylic acid. 2 disulfides stabilise this stretch: Cys4/Cys60 and Cys18/Cys29. Active-site residues include Glu73 and Asp86.

The protein belongs to the glycosyl hydrolase 23 family.

Its subcellular location is the secreted. The catalysed reaction is Hydrolysis of (1-&gt;4)-beta-linkages between N-acetylmuramic acid and N-acetyl-D-glucosamine residues in a peptidoglycan and between N-acetyl-D-glucosamine residues in chitodextrins.. The polypeptide is Lysozyme g (Casuarius casuarius (Southern cassowary)).